A 505-amino-acid chain; its full sequence is Lysine--tRNA ligase (505 aa).

The Mg(2+) site is built by E415 and E422.

The protein belongs to the class-II aminoacyl-tRNA synthetase family. Homodimer. Mg(2+) is required as a cofactor.

It localises to the cytoplasm. It catalyses the reaction tRNA(Lys) + L-lysine + ATP = L-lysyl-tRNA(Lys) + AMP + diphosphate. The sequence is that of Lysine--tRNA ligase from Enterobacter sp. (strain 638).